The following is a 145-amino-acid chain: Large ribosomal subunit protein uL13 (145 aa).

Belongs to the universal ribosomal protein uL13 family. Part of the 50S ribosomal subunit. Binds to Obg (AC P20964).

In terms of biological role, this protein is one of the early assembly proteins of the 50S ribosomal subunit, although it is not seen to bind rRNA by itself. It is important during the early stages of 50S assembly. The sequence is that of Large ribosomal subunit protein uL13 from Bacillus subtilis (strain 168).